A 509-amino-acid polypeptide reads, in one-letter code: Maturase K (509 aa).

Belongs to the intron maturase 2 family. MatK subfamily.

It localises to the plastid. The protein localises to the chloroplast. Functionally, usually encoded in the trnK tRNA gene intron. Probably assists in splicing its own and other chloroplast group II introns. In Hottonia palustris (Water-violet), this protein is Maturase K.